The chain runs to 854 residues: Aryl hydrocarbon receptor (854 aa).

The propeptide occupies Met-1–Tyr-9. Residues Met-1–His-38 form a disordered region. 2 consecutive short sequence motifs (nuclear localization signal) follow at residues Arg-12–Arg-15 and Lys-36–Arg-41. The 54-residue stretch at Pro-26–Lys-79 folds into the bHLH domain. Residues Arg-37 to Lys-65 form a DNA-binding region. Required for maintaining the overall integrity of the AHR:ARNT heterodimer and its transcriptional activity stretches follow at residues Leu-49–Phe-81, Leu-116–Val-124, and Phe-264–Ile-266. The Nuclear export signal signature appears at Leu-63–Leu-71. Positions Gln-111–Ala-175 constitute a PAS 1 domain. In terms of domain architecture, PAS 2 spans Leu-270–Lys-340. The PAC domain maps to Met-346 to Glu-387. A disordered region spans residues Leu-425 to Pro-451. Residues Pro-440 to Pro-451 show a composition bias toward polar residues.

As to quaternary structure, homodimer. Heterodimer; efficient DNA binding requires dimerization with another bHLH protein. Interacts with ARNT; the heterodimer ARNT:AHR binds to core DNA sequence 5'-TGCGTG-3' within the dioxin response element (DRE) of target gene promoters and activates their transcription. Binds MYBBP1A. Interacts with coactivators including SRC-1, RIP140 and NOCA7, and with the corepressor SMRT. Interacts with NEDD8 and IVNS1ABP. Interacts with BMAL1. Interacts with HSP90AB1. Interacts with TIPARP; leading to mono-ADP-ribosylation of AHR and subsequent inhibition of AHR. Post-translationally, mono-ADP-ribosylated, leading to inhibit transcription activator activity of AHR.

The protein localises to the cytoplasm. It is found in the nucleus. Its function is as follows. Ligand-activated transcription factor that enables cells to adapt to changing conditions by sensing compounds from the environment, diet, microbiome and cellular metabolism, and which plays important roles in development, immunity and cancer. Upon ligand binding, translocates into the nucleus, where it heterodimerizes with ARNT and induces transcription by binding to xenobiotic response elements (XRE). Regulates a variety of biological processes, including angiogenesis, hematopoiesis, drug and lipid metabolism, cell motility and immune modulation. Xenobiotics can act as ligands: upon xenobiotic-binding, activates the expression of multiple phase I and II xenobiotic chemical metabolizing enzyme genes (such as the CYP1A1 gene). Mediates biochemical and toxic effects of halogenated aromatic hydrocarbons. Next to xenobiotics, natural ligands derived from plants, microbiota, and endogenous metabolism are potent AHR agonists. Tryptophan (Trp) derivatives constitute an important class of endogenous AHR ligands. Acts as a negative regulator of anti-tumor immunity: indoles and kynurenic acid generated by Trp catabolism act as ligand and activate AHR, thereby promoting AHR-driven cancer cell motility and suppressing adaptive immunity. Regulates the circadian clock by inhibiting the basal and circadian expression of the core circadian component PER1. Inhibits PER1 by repressing the CLOCK-BMAL1 heterodimer mediated transcriptional activation of PER1. The heterodimer ARNT:AHR binds to core DNA sequence 5'-TGCGTG-3' within the dioxin response element (DRE) of target gene promoters and activates their transcription. The sequence is that of Aryl hydrocarbon receptor (Ahr) from Mus spicilegus (Steppe mouse).